Reading from the N-terminus, the 239-residue chain is Protein-S-isoprenylcysteine O-methyltransferase (239 aa).

Topologically, residues 1 to 23 are cytoplasmic; the sequence is MHQDFQEDEHEYPDIRRNPLHEV. Residues 24–44 traverse the membrane as a helical segment; the sequence is TMTSYILGILLGIFVGLFPQI. The Lumenal portion of the chain corresponds to 45–47; that stretch reads RFK. A helical transmembrane segment spans residues 48 to 68; it reads NFNLFIIALSLFHFLEYYITA. At 69 to 88 the chain is on the cytoplasmic side; it reads KYNPLKVHSESFLLNNGKSY. The chain crosses the membrane as a helical span at residues 89-109; that stretch reads MAAHSFAILECLVESFLFPDL. Position 110 (lysine 110) is a topological domain, lumenal. A helical transmembrane segment spans residues 111–131; it reads IFSYSLATKLCTVLGCLLVIL. Residues 132–175 are Cytoplasmic-facing; that stretch reads GQYTRTIAMHTAGHSFSHIVKTKKESDHVLVKTGVYSWSRHPSY. S-adenosyl-L-methionine is bound by residues 159 to 162, tyrosine 167, and 172 to 175; these read HVLV and HPSY. An intramembrane region (helical) is located at residues 176–206; the sequence is LGFFWWAIGTQLLLLNPLSLVIFIFVLWKFF. Residues 207–239 lie on the Cytoplasmic side of the membrane; the sequence is SDRIRVEEKYLIEFFSAEYIEYKNKVGVGIPFI. Arginine 209 provides a ligand contact to substrate. Glutamate 213 is a binding site for S-adenosyl-L-methionine.

This sequence belongs to the class VI-like SAM-binding methyltransferase superfamily. Isoprenylcysteine carboxyl methyltransferase family.

It is found in the endoplasmic reticulum membrane. The enzyme catalyses [protein]-C-terminal S-[(2E,6E)-farnesyl]-L-cysteine + S-adenosyl-L-methionine = [protein]-C-terminal S-[(2E,6E)-farnesyl]-L-cysteine methyl ester + S-adenosyl-L-homocysteine. In terms of biological role, mediates C-terminal methylation of the isoprenylated C-terminal cysteine in A-factor mating pheromone and Ras proteins. Does not have a preference for the farnesyl or geranylgeranyl moieties in the model substrates N-acetyl-S-farnesyl-L-cysteine (AFC) and N-acetyl-S-geranylgeranyl-L-cysteine (AGGC) in vitro. This chain is Protein-S-isoprenylcysteine O-methyltransferase (STE14), found in Saccharomyces cerevisiae (strain ATCC 204508 / S288c) (Baker's yeast).